Reading from the N-terminus, the 304-residue chain is HPr kinase/phosphorylase (304 aa).

Residues H136 and K157 contribute to the active site. 151–158 (GESGIGKS) contacts ATP. Position 158 (S158) interacts with Mg(2+). D175 (proton acceptor; for phosphorylation activity. Proton donor; for dephosphorylation activity) is an active-site residue. The interval 198–207 (LEVRGMGIID) is important for the catalytic mechanism of both phosphorylation and dephosphorylation. Position 199 (E199) interacts with Mg(2+). R240 is a catalytic residue. The segment at 261–266 (PIRPGR) is important for the catalytic mechanism of dephosphorylation.

Belongs to the HPrK/P family. Homohexamer. The cofactor is Mg(2+).

It carries out the reaction [HPr protein]-L-serine + ATP = [HPr protein]-O-phospho-L-serine + ADP + H(+). It catalyses the reaction [HPr protein]-O-phospho-L-serine + phosphate + H(+) = [HPr protein]-L-serine + diphosphate. In terms of biological role, catalyzes the ATP- as well as the pyrophosphate-dependent phosphorylation of a specific serine residue in HPr, a phosphocarrier protein of the phosphoenolpyruvate-dependent sugar phosphotransferase system (PTS). HprK/P also catalyzes the pyrophosphate-producing, inorganic phosphate-dependent dephosphorylation (phosphorolysis) of seryl-phosphorylated HPr (P-Ser-HPr). The two antagonistic activities of HprK/P are regulated by several intracellular metabolites, which change their concentration in response to the absence or presence of rapidly metabolisable carbon sources (glucose, fructose, etc.) in the growth medium. Therefore, by controlling the phosphorylation state of HPr, HPrK/P is a sensor enzyme that plays a major role in the regulation of carbon metabolism and sugar transport: it mediates carbon catabolite repression (CCR), and regulates PTS-catalyzed carbohydrate uptake and inducer exclusion. The chain is HPr kinase/phosphorylase from Clostridium acetobutylicum (strain ATCC 824 / DSM 792 / JCM 1419 / IAM 19013 / LMG 5710 / NBRC 13948 / NRRL B-527 / VKM B-1787 / 2291 / W).